A 353-amino-acid polypeptide reads, in one-letter code: Ferredoxin--NADP reductase (353 aa).

Residues D47, Q55, Y60, V100, F135, D299, and S340 each contribute to the FAD site.

It belongs to the ferredoxin--NADP reductase type 2 family. In terms of assembly, homodimer. It depends on FAD as a cofactor.

It catalyses the reaction 2 reduced [2Fe-2S]-[ferredoxin] + NADP(+) + H(+) = 2 oxidized [2Fe-2S]-[ferredoxin] + NADPH. The polypeptide is Ferredoxin--NADP reductase (Paraburkholderia xenovorans (strain LB400)).